Reading from the N-terminus, the 66-residue chain is Large ribosomal subunit protein bL33c (66 aa).

The protein belongs to the bacterial ribosomal protein bL33 family.

It is found in the plastid. It localises to the chloroplast. The polypeptide is Large ribosomal subunit protein bL33c (Liriodendron tulipifera (Tuliptree)).